The following is a 915-amino-acid chain: Protein translocase subunit SecA (915 aa).

ATP-binding positions include Gln87, 105–109 (GEGKT), and Asp512. A compositionally biased stretch (low complexity) spans 849 to 864 (AAQQQARQAPLPNAPA). Residues 849 to 915 (AAQQQARQAP…CHGSRAKDHA (67 aa)) are disordered. The segment covering 876 to 891 (PEEKVARVAAERHIGR) has biased composition (basic and acidic residues). Zn(2+) is bound by residues Cys895, Cys897, Cys906, and His907.

The protein belongs to the SecA family. In terms of assembly, monomer and homodimer. Part of the essential Sec protein translocation apparatus which comprises SecA, SecYEG and auxiliary proteins SecDF-YajC and YidC. It depends on Zn(2+) as a cofactor.

Its subcellular location is the cell inner membrane. The protein localises to the cytoplasm. It carries out the reaction ATP + H2O + cellular proteinSide 1 = ADP + phosphate + cellular proteinSide 2.. In terms of biological role, part of the Sec protein translocase complex. Interacts with the SecYEG preprotein conducting channel. Has a central role in coupling the hydrolysis of ATP to the transfer of proteins into and across the cell membrane, serving both as a receptor for the preprotein-SecB complex and as an ATP-driven molecular motor driving the stepwise translocation of polypeptide chains across the membrane. This chain is Protein translocase subunit SecA, found in Actinobacillus succinogenes (strain ATCC 55618 / DSM 22257 / CCUG 43843 / 130Z).